Here is a 158-residue protein sequence, read N- to C-terminus: uncharacterized protein (158 aa).

Functionally, the presence of the two linear plasmids, termed pGKL1 and pGKL2, in strains of Kluyveromyces lactis confers the killer phenotype to the host cell, by promoting the secretion of a toxin able to inhibit the growth of sensitive strains. This is an uncharacterized protein from Kluyveromyces lactis (strain ATCC 8585 / CBS 2359 / DSM 70799 / NBRC 1267 / NRRL Y-1140 / WM37) (Yeast).